The primary structure comprises 519 residues: MKPYYVTTAIAYPNAAPHVGHAYEYIATDAIARFKRLDRYDVRFLTGTDEHGLKVAQAAAAAGVPTAALARRNSDVFQRMQEALNISFDRFIRTTDADHHEASKELWRRMSAAGDIYLDNYSGWYSVRDERFFVESETQLVDGTRLTVETGTPVTWTEEQTYFFRLSAYTDKLLAHYHANPDFIAPETRRNEVISFVSGGLDDLSISRTSFDWGVQVPEHPDHVMYVWVDALTNYLTGAGFPDTDSELFRRYWPADLHMIGKDIIRFHAVYWPAFLMSAGIELPRRIFAHGFLHNRGEKMSKSVGNIVDPVALAEALGVDQVRYFLLREVPFGQDGSYSDEAIVTRINTDLANELGNLAQRSLSMVAKNLDGRVPNPGEFADADAALLATADGLLERVRGHFDAQAMHLALEAIWLMLGDANKYFSVQQPWVLRKSESEADQARFRTTLYVTCEVVRIAALLIQPVMPESAGKILDLLGQAPNQRSFAAVGVRLTPGTALPPPTGVFPRYQPPQPPEGK.

The short motif at 11–21 is the 'HIGH' region element; it reads AYPNAAPHVGH. A 'KMSKS' region motif is present at residues 299 to 303; that stretch reads KMSKS. Position 302 (Lys-302) interacts with ATP. The interval 500-519 is disordered; the sequence is LPPPTGVFPRYQPPQPPEGK.

Belongs to the class-I aminoacyl-tRNA synthetase family. MetG type 2B subfamily. As to quaternary structure, monomer.

It localises to the cytoplasm. The enzyme catalyses tRNA(Met) + L-methionine + ATP = L-methionyl-tRNA(Met) + AMP + diphosphate. Is required not only for elongation of protein synthesis but also for the initiation of all mRNA translation through initiator tRNA(fMet) aminoacylation. This Mycobacterium tuberculosis (strain ATCC 25618 / H37Rv) protein is Methionine--tRNA ligase.